We begin with the raw amino-acid sequence, 30 residues long: L-amino-acid oxidase (30 aa).

It belongs to the flavin monoamine oxidase family. FIG1 subfamily. In terms of assembly, monomer. This is in contrast with most of its orthologs, that are non-covalently linked homodimers. FAD serves as cofactor. Post-translationally, N-glycosylated. Expressed by the venom gland.

The protein resides in the secreted. The enzyme catalyses an L-alpha-amino acid + O2 + H2O = a 2-oxocarboxylate + H2O2 + NH4(+). It carries out the reaction L-leucine + O2 + H2O = 4-methyl-2-oxopentanoate + H2O2 + NH4(+). The catalysed reaction is L-phenylalanine + O2 + H2O = 3-phenylpyruvate + H2O2 + NH4(+). It catalyses the reaction L-tryptophan + O2 + H2O = indole-3-pyruvate + H2O2 + NH4(+). The enzyme catalyses L-methionine + O2 + H2O = 4-methylsulfanyl-2-oxobutanoate + H2O2 + NH4(+). It carries out the reaction L-2-aminohexanoate + O2 + H2O = 2-oxohexanoate + H2O2 + NH4(+). The catalysed reaction is L-tyrosine + O2 + H2O = 3-(4-hydroxyphenyl)pyruvate + H2O2 + NH4(+). In terms of biological role, catalyzes an oxidative deamination of predominantly hydrophobic and aromatic L-amino acids, thus producing hydrogen peroxide that may contribute to the diverse toxic effects of this enzyme. Is highly active against L-Met, L-Leu, L-norleucine (L-2-aminohexanoate), L-Trp, L-Phe, moderately active against L-Tyr, and no active on L-Gly, L-Ala, L-Val, L-Pro, L-His, L-Lys, L-Arg, L-Asp, L-Asn, L-Gln, L-Glu, L-Ser, and L-Thr. Exhibits diverse biological activities, such as hemorrhage, hemolysis, edema, antibacterial and antiparasitic activities. In addition, this protein induces apoptosis. It also interacts with endothelial cells, and inhibits collagen- and ADP-induced platelet aggregation. L-LAAO family effects on platelets are controversial, since it either induces aggregation or inhibits agonist-induced aggregation. These different effects are probably due to different experimental conditions. This Bothrops leucurus (Whitetail lancehead) protein is L-amino-acid oxidase.